Here is a 385-residue protein sequence, read N- to C-terminus: Succinate--CoA ligase [ADP-forming] subunit beta (385 aa).

Positions 9–237 constitute an ATP-grasp domain; the sequence is KEILRQFGVN…LEAEHPLEIE (229 aa). Residues Lys-45, 52–54, Val-94, and Glu-101 contribute to the ATP site; that span reads GRG. Asn-192 and Asp-206 together coordinate Mg(2+). Substrate contacts are provided by residues Asn-257 and 314 to 316; that span reads GIT.

The protein belongs to the succinate/malate CoA ligase beta subunit family. As to quaternary structure, heterotetramer of two alpha and two beta subunits. Mg(2+) is required as a cofactor.

It carries out the reaction succinate + ATP + CoA = succinyl-CoA + ADP + phosphate. The enzyme catalyses GTP + succinate + CoA = succinyl-CoA + GDP + phosphate. Its pathway is carbohydrate metabolism; tricarboxylic acid cycle; succinate from succinyl-CoA (ligase route): step 1/1. In terms of biological role, succinyl-CoA synthetase functions in the citric acid cycle (TCA), coupling the hydrolysis of succinyl-CoA to the synthesis of either ATP or GTP and thus represents the only step of substrate-level phosphorylation in the TCA. The beta subunit provides nucleotide specificity of the enzyme and binds the substrate succinate, while the binding sites for coenzyme A and phosphate are found in the alpha subunit. This is Succinate--CoA ligase [ADP-forming] subunit beta from Deinococcus deserti (strain DSM 17065 / CIP 109153 / LMG 22923 / VCD115).